A 201-amino-acid chain; its full sequence is 3-isopropylmalate dehydratase small subunit (201 aa).

It belongs to the LeuD family. LeuD type 1 subfamily. Heterodimer of LeuC and LeuD.

The enzyme catalyses (2R,3S)-3-isopropylmalate = (2S)-2-isopropylmalate. It functions in the pathway amino-acid biosynthesis; L-leucine biosynthesis; L-leucine from 3-methyl-2-oxobutanoate: step 2/4. Its function is as follows. Catalyzes the isomerization between 2-isopropylmalate and 3-isopropylmalate, via the formation of 2-isopropylmaleate. The chain is 3-isopropylmalate dehydratase small subunit from Salmonella schwarzengrund (strain CVM19633).